Reading from the N-terminus, the 81-residue chain is CLAVATA3/ESR (CLE)-related protein 25 (81 aa).

A signal peptide spans 1-30 (MGGNGIRALVGVIASLGLIVFLLVGILANS). The tract at residues 57–81 (KRKVPNGPDPIHNRKAETSRRPPRV) is disordered. 2 positions are modified to hydroxyproline: proline 61 and proline 64. Proline 64 carries O-linked (Ara...) hydroxyproline glycosylation. A compositionally biased stretch (basic and acidic residues) spans 67-81 (IHNRKAETSRRPPRV).

This sequence belongs to the CLV3/ESR signal peptide family. Post-translationally, the O-glycosylation (arabinosylation) of the hydroxyproline Pro-64 enhances binding affinity of the CLE25p peptide for its receptor. Mostly expressed in flowers and siliques, and, to a lower extent, in roots, stems, apex, seedlings, leaves and pollen.

The protein resides in the secreted. Its subcellular location is the extracellular space. Functionally, extracellular signal peptide that regulates cell fate. Represses root apical meristem maintenance. Regulates the transition of protophloem cells from proliferation to differentiation, thus impinging on postembryonic growth capacity of the root meristem; this signaling pathway requires CRN and CLV2. The chain is CLAVATA3/ESR (CLE)-related protein 25 from Arabidopsis thaliana (Mouse-ear cress).